The following is a 170-amino-acid chain: Calcineurin subunit B type 1 (170 aa).

EF-hand domains follow at residues 18–46 (DEIR…FMSL), 50–85 (QQNP…FSVR), 87–122 (DKLS…MVGN), and 128–163 (QLQQ…TDIH). Residues aspartate 31, aspartate 33, serine 35, glutamate 42, aspartate 63, aspartate 65, asparagine 67, glutamate 69, glutamate 74, aspartate 100, aspartate 102, aspartate 104, tyrosine 106, glutamate 111, aspartate 141, aspartate 143, aspartate 145, lysine 147, and glutamate 152 each contribute to the Ca(2+) site.

The protein belongs to the calcineurin regulatory subunit family. As to quaternary structure, composed of two components (A and B), the A component is the catalytic subunit and the B component confers calcium sensitivity.

Calcineurin is a calcium-binding and calmodulin-binding protein found in all cells from yeast to mammals, and a calcium-dependent, calmodulin-stimulated protein phosphatase. This Drosophila melanogaster (Fruit fly) protein is Calcineurin subunit B type 1 (CanB).